The chain runs to 185 residues: Ribosome-recycling factor (185 aa).

The disordered stretch occupies residues 136–161 (MDSLKTDEKKGEIGEDDRKRRETEVQ).

This sequence belongs to the RRF family.

The protein resides in the cytoplasm. In terms of biological role, responsible for the release of ribosomes from messenger RNA at the termination of protein biosynthesis. May increase the efficiency of translation by recycling ribosomes from one round of translation to another. The sequence is that of Ribosome-recycling factor from Rhizorhabdus wittichii (strain DSM 6014 / CCUG 31198 / JCM 15750 / NBRC 105917 / EY 4224 / RW1) (Sphingomonas wittichii).